Reading from the N-terminus, the 112-residue chain is Colipase (112 aa).

The signal sequence occupies residues 1 to 17; sequence MEKILVLLLVALAVVYA. Positions 18 to 22 are cleaved as a propeptide — enterostatin, activation peptide; it reads VPDPR. 5 disulfide bridges follow: Cys34–Cys45, Cys40–Cys56, Cys44–Cys78, Cys66–Cys86, and Cys80–Cys104.

This sequence belongs to the colipase family. As to quaternary structure, forms a 1:1 stoichiometric complex with pancreatic lipase. Expressed by the pancreas.

Its subcellular location is the secreted. Its function is as follows. Colipase is a cofactor of pancreatic lipase. It allows the lipase to anchor itself to the lipid-water interface. Without colipase the enzyme is washed off by bile salts, which have an inhibitory effect on the lipase. Enterostatin has a biological activity as a satiety signal. The polypeptide is Colipase (CLPS) (Canis lupus familiaris (Dog)).